A 220-amino-acid chain; its full sequence is Ripening-related protein grip22 (220 aa).

The signal sequence occupies residues 1 to 27 (MAKSALVWLASVCLVFNILSLPFLALG).

The protein belongs to the kiwellin family. As to expression, expressed in ripening fruits.

The protein resides in the secreted. The chain is Ripening-related protein grip22 (grip22) from Vitis vinifera (Grape).